An 86-amino-acid polypeptide reads, in one-letter code: Gas vesicle protein M (86 aa).

The protein belongs to the gas vesicle GvpA family. In terms of assembly, gvpF to GvpM interact with each other in vitro, and may form multi-subunit complex(es). Might interact with GvpA.

Its subcellular location is the gas vesicle. Functionally, proteins GvpF to GvpM might be involved in nucleating gas vesicle formation. A minor component of the gas vesicle. Gas vesicles are small, hollow, gas filled protein structures found in some microorganisms. They allow positioning of halobacteria at the optimal depth for growth in the poorly aerated, shallow brine pools of their habitat. Expression of a 9.5 kb mc-vac DNA fragment containing 2 divergently transcribed regions (gvpD-gvpE-gvpF-gvpG-gvpH-gvpI-gvpJ-gvpK-gvpL-gvpM and gvpA-gvpC-gvpN-gvpO) allows H.volcanii to produce gas vesicles. The polypeptide is Gas vesicle protein M (Haloferax mediterranei (strain ATCC 33500 / DSM 1411 / JCM 8866 / NBRC 14739 / NCIMB 2177 / R-4) (Halobacterium mediterranei)).